The sequence spans 117 residues: Large ribosomal subunit protein bL20 (117 aa).

Belongs to the bacterial ribosomal protein bL20 family.

Binds directly to 23S ribosomal RNA and is necessary for the in vitro assembly process of the 50S ribosomal subunit. It is not involved in the protein synthesizing functions of that subunit. The polypeptide is Large ribosomal subunit protein bL20 (Actinobacillus succinogenes (strain ATCC 55618 / DSM 22257 / CCUG 43843 / 130Z)).